The primary structure comprises 535 residues: MESMVNNLWSSWDTLSQATASTGGDMDAASVASKQSPQESKMAASSMIWSSFSEPQKTPPTKRASSSFFDDMFTSSKDHSTTLTDKMFERFLSMALPTTTTQDGEELQSILERIEMQKSRPQLSLNVMSKNAIQLLSRLSVPFVLIDQVIIIFSWSKPLYTLTFLNVATLLILKPILLLSLPFFYTCFEIIVPAYMKRHPPDKHTILQNRNPIPAEGPSVSHVDVPRPVPELSREFVLNSTDLQNHMLLYVMSYDFVTSLIVKYLYFKDENITIFIFVALLTSGTLLTLFGAQVLSAMLPFIKVTLSVGLWAATIAMHPNYRSTLLDMLYSEDTRLRLLMMSNRLELWLNKELNLREQKEVKETEIFELQHLDPETHNWQLICFSSDPYPANSHARLNNLPLLGTLHLSQVKPPEGWKFVDVETAVNTRSVDGWLLDLTPEGWIKENFLNETMDIDEDEKWCYDLVTKFSYQAGLTTNEKKTRGEVRRRRWIRYCVRDIWDEDDQMEETVAHRRNKSMESSNSLHPVKSIDSVDG.

2 helical membrane passes run 139–159 (LSVPFVLIDQVIIIFSWSKPL) and 176–196 (ILLLSLPFFYTCFEIIVPAYM). Asn239 is a glycosylation site (N-linked (GlcNAc...) asparagine). A helical transmembrane segment spans residues 247-267 (MLLYVMSYDFVTSLIVKYLYF). A glycan (N-linked (GlcNAc...) asparagine) is linked at Asn271. 2 consecutive transmembrane segments (helical) span residues 272–292 (ITIFIFVALLTSGTLLTLFGA) and 297–317 (AMLPFIKVTLSVGLWAATIAM). Asn450 and Asn515 each carry an N-linked (GlcNAc...) asparagine glycan. Positions 511 to 535 (AHRRNKSMESSNSLHPVKSIDSVDG) are disordered.

The protein belongs to the PEX28-32 family. PEX29 subfamily.

The protein resides in the endoplasmic reticulum membrane. In terms of biological role, with PEX23, contributes to the formation of endoplasmic reticulum-mitochondria junctions which are important for mitochondrial function. Involved in lipid dropplets formation. This chain is Peroxisomal membrane protein PEX29, found in Ogataea parapolymorpha (strain ATCC 26012 / BCRC 20466 / JCM 22074 / NRRL Y-7560 / DL-1) (Yeast).